Consider the following 406-residue polypeptide: Dual-specificity RNA methyltransferase RlmN (406 aa).

Glu119 (proton acceptor) is an active-site residue. Residues 125-370 (DKGRGTLCVS…AMVRRTRGDD (246 aa)) enclose the Radical SAM core domain. Cys132 and Cys375 are disulfide-bonded. [4Fe-4S] cluster-binding residues include Cys139, Cys143, and Cys146. Residues 192–193 (GE), Ser224, 246–248 (SLH), and Asn332 each bind S-adenosyl-L-methionine. Cys375 (S-methylcysteine intermediate) is an active-site residue.

It belongs to the radical SAM superfamily. RlmN family. It depends on [4Fe-4S] cluster as a cofactor.

The protein localises to the cytoplasm. It carries out the reaction adenosine(2503) in 23S rRNA + 2 reduced [2Fe-2S]-[ferredoxin] + 2 S-adenosyl-L-methionine = 2-methyladenosine(2503) in 23S rRNA + 5'-deoxyadenosine + L-methionine + 2 oxidized [2Fe-2S]-[ferredoxin] + S-adenosyl-L-homocysteine. The enzyme catalyses adenosine(37) in tRNA + 2 reduced [2Fe-2S]-[ferredoxin] + 2 S-adenosyl-L-methionine = 2-methyladenosine(37) in tRNA + 5'-deoxyadenosine + L-methionine + 2 oxidized [2Fe-2S]-[ferredoxin] + S-adenosyl-L-homocysteine. Its function is as follows. Specifically methylates position 2 of adenine 2503 in 23S rRNA and position 2 of adenine 37 in tRNAs. m2A2503 modification seems to play a crucial role in the proofreading step occurring at the peptidyl transferase center and thus would serve to optimize ribosomal fidelity. The chain is Dual-specificity RNA methyltransferase RlmN from Xylella fastidiosa (strain 9a5c).